The following is a 471-amino-acid chain: Putative metabolite transport protein YncC (471 aa).

Transmembrane regions (helical) follow at residues 13–33 (LIMI…GVIN), 50–70 (VTEG…ALLC), 88–108 (FLFF…IMAV), 111–131 (FLLG…LAEM), 146–166 (LMIV…GVTM), 175–195 (YMLV…LKVP), 256–276 (LLWI…NSIM), 295–315 (IANI…IWLV), 323–343 (ILLI…IFSI), 358–378 (LTVL…WLVI), 393–413 (ISVF…PILL), and 416–436 (VGLS…IGFV).

Belongs to the major facilitator superfamily. Sugar transporter (TC 2.A.1.1) family.

It is found in the cell membrane. This chain is Putative metabolite transport protein YncC (yncC), found in Bacillus subtilis (strain 168).